Consider the following 300-residue polypeptide: Free fatty acid receptor 1 (300 aa).

The Extracellular portion of the chain corresponds to 1-8 (MALSPQLF). Residues 9-31 (FALYVSAFALGFPLNLLAIRGAV) traverse the membrane as a helical segment. Residues 32 to 41 (ARARLRLTPN) are Cytoplasmic-facing. A helical membrane pass occupies residues 42–64 (LVYTLHLACSDLLLAITLPVKAV). Over 65-79 (EALASGAWPLPLPLC) the chain is Extracellular. Cys-79 and Cys-170 are joined by a disulfide. A helical membrane pass occupies residues 80–101 (PVFVLVHFAPLYAGGGFLAALS). The Cytoplasmic segment spans residues 102 to 121 (AGRYLGAAFPFGYQAVRRPR). Residues 122–142 (YSWGVCVAIWALVLCHMGLVL) form a helical membrane-spanning segment. Residues 143–178 (GLEAPGGWLNTTSSSLGINTPVNGSPVCLEAWDPNS) are Extracellular-facing. N-linked (GlcNAc...) asparagine glycosylation occurs at Asn-152. The helical transmembrane segment at 179–200 (ARPARLSFSILLFFVPLVITAF) threads the bilayer. The Cytoplasmic segment spans residues 201-223 (CYVGCLRALAHSGLSHKRKLRAA). The chain crosses the membrane as a helical span at residues 224–248 (WAAGGAFLTLLLCLGPYNASNVASF). Residues 249-256 (VNPDLGGS) are Extracellular-facing. Residues 257–279 (WRKLGLITGSWSVVLNPLVTGYL) form a helical membrane-spanning segment. At 280–300 (GASPGRGTVCTTRTQGGTIQK) the chain is on the cytoplasmic side.

This sequence belongs to the G-protein coupled receptor 1 family.

It is found in the cell membrane. G-protein coupled receptor for medium and long chain saturated and unsaturated fatty acids that plays an important role in glucose homeostasis. Fatty acid binding increases glucose-stimulated insulin secretion, and may also enhance the secretion of glucagon-like peptide 1 (GLP-1). May also play a role in bone homeostasis; receptor signaling activates pathways that inhibit osteoclast differentiation. Ligand binding leads to a conformation change that triggers signaling via G-proteins that activate phospholipase C, leading to an increase of the intracellular calcium concentration. Seems to act through a G(q) and G(i)-mediated pathway. Mediates the anti-inflammatory effects of omega-3 polyunsaturated fatty acids (PUFAs) via inhibition of NLRP3 inflammasome activation. The chain is Free fatty acid receptor 1 (FFAR1) from Mesocricetus auratus (Golden hamster).